We begin with the raw amino-acid sequence, 96 residues long: LSFAANVVNARFDSTSFITQVLSNGDDVKSACCDTCLCTKSNPPTCRCVDVRETCHSACDSCICAYSNPPKCQCFDTHKFCYKACHNSEVEEVIKN.

An N-terminal signal peptide occupies residues Leu-1 to Ala-10. Residues Arg-11–Asn-24 constitute a propeptide that is removed on maturation. 7 disulfide bridges follow: Cys-32/Cys-85, Cys-33/Cys-48, Cys-36/Cys-81, Cys-38/Cys-46, Cys-55/Cys-62, Cys-59/Cys-74, and Cys-64/Cys-72. The propeptide at Ser-88–Asn-96 is removed in PSTI I.

Belongs to the Bowman-Birk serine protease inhibitor family. As to expression, seed.

Inhibitor of trypsin and of chymotrypsin. May function as a natural phytochemical defense against predators. This chain is Seed trypsin/chymotrypsin inhibitor IVA (TI1236), found in Pisum sativum (Garden pea).